Reading from the N-terminus, the 155-residue chain is Small ribosomal subunit protein uS7c (155 aa).

Belongs to the universal ribosomal protein uS7 family. In terms of assembly, part of the 30S ribosomal subunit.

The protein localises to the plastid. It localises to the chloroplast. Functionally, one of the primary rRNA binding proteins, it binds directly to 16S rRNA where it nucleates assembly of the head domain of the 30S subunit. The protein is Small ribosomal subunit protein uS7c (rps7) of Saururus cernuus (Lizard's tail).